A 314-amino-acid chain; its full sequence is Olfactory receptor 8D4 (314 aa).

Topologically, residues 1 to 25 (MGVKNHSTVTEFLLSGLTEQAELQL) are extracellular. Asn5 carries N-linked (GlcNAc...) asparagine glycosylation. A helical transmembrane segment spans residues 26–46 (PLFCLFLGIYTVTVVGNLSMI). The Cytoplasmic portion of the chain corresponds to 47-54 (SIIRLNRQ). The chain crosses the membrane as a helical span at residues 55–75 (LHTPMYYFLSSLSFLDFCYSS). The Extracellular segment spans residues 76–99 (VITPKMLSGFLCRDRSISYSGCMI). Cys97 and Cys189 form a disulfide bridge. The helical transmembrane segment at 100–120 (QLFFFCVCVISECYMLAAMAC) threads the bilayer. Topologically, residues 121-139 (DRYVAICSPLLYRVIMSPR) are cytoplasmic. A helical transmembrane segment spans residues 140-160 (VCSLLVAAVFSVGFTDAVIHG). Residues 161-197 (GCILRLSFCGSNIIKHYFCDIVPLIKLSCSSTYIDEL) lie on the Extracellular side of the membrane. Residues 198–217 (LIFVIGGFNMVATSLTIIIS) traverse the membrane as a helical segment. The Cytoplasmic segment spans residues 218 to 237 (YAFILTSILRIHSKKGRCKA). Residues 238 to 258 (FSTCSSHLTAVLMFYGSLMSM) form a helical membrane-spanning segment. At 259-271 (YLKPASSSSLTQE) the chain is on the extracellular side. A helical transmembrane segment spans residues 272–292 (KVSSVFYTTVILMLNPLIYSL). Over 293 to 314 (RNNEVRNALMKLLRRKISLSPG) the chain is Cytoplasmic.

The protein belongs to the G-protein coupled receptor 1 family.

Its subcellular location is the cell membrane. Its function is as follows. Odorant receptor. The polypeptide is Olfactory receptor 8D4 (OR8D4) (Homo sapiens (Human)).